An 89-amino-acid polypeptide reads, in one-letter code: Small ribosomal subunit protein uS15 (89 aa).

The protein belongs to the universal ribosomal protein uS15 family. As to quaternary structure, part of the 30S ribosomal subunit. Forms a bridge to the 50S subunit in the 70S ribosome, contacting the 23S rRNA.

One of the primary rRNA binding proteins, it binds directly to 16S rRNA where it helps nucleate assembly of the platform of the 30S subunit by binding and bridging several RNA helices of the 16S rRNA. In terms of biological role, forms an intersubunit bridge (bridge B4) with the 23S rRNA of the 50S subunit in the ribosome. This chain is Small ribosomal subunit protein uS15, found in Mycobacteroides abscessus (strain ATCC 19977 / DSM 44196 / CCUG 20993 / CIP 104536 / JCM 13569 / NCTC 13031 / TMC 1543 / L948) (Mycobacterium abscessus).